The chain runs to 456 residues: Phosphomannomutase (456 aa).

Catalysis depends on S98, which acts as the Phosphoserine intermediate. Residues S98, D245, D247, and D249 each contribute to the Mg(2+) site.

This sequence belongs to the phosphohexose mutase family. The cofactor is Mg(2+).

It carries out the reaction alpha-D-mannose 1-phosphate = D-mannose 6-phosphate. It participates in nucleotide-sugar biosynthesis; GDP-alpha-D-mannose biosynthesis; alpha-D-mannose 1-phosphate from D-fructose 6-phosphate: step 2/2. Its function is as follows. Involved in the biosynthesis of the capsular polysaccharide colanic acid. The protein is Phosphomannomutase (manB) of Escherichia coli (strain K12).